A 253-amino-acid chain; its full sequence is MAGHSKWANIKRQKARVDAKKAQVFARLSRAMIVAARQGLPDPAANFQLRTAIEKAKAAGIPNDNIERAIAKGAGTLSGDGRQFESVRYEGYGPSGIAILIEALTDNRNRTAANLRAAFSKQGGNLGETGCVSWMFRQRGVVQLTGAIAEADLLKALLDLPAESYDLDESGAIVYCSIADLEALSTQLRQLGYPVEDSELRWIPNDYQLVTDGEQARSLLRLLDTLETLEDVCSVTANLELPPELVTALEATL.

Belongs to the TACO1 family.

Its subcellular location is the cytoplasm. In Synechococcus sp. (strain ATCC 27144 / PCC 6301 / SAUG 1402/1) (Anacystis nidulans), this protein is Probable transcriptional regulatory protein syc0529_d.